Reading from the N-terminus, the 199-residue chain is Recombination protein RecR (199 aa).

The segment at 56–71 (CQRCNTFTEGDICERC) adopts a C4-type zinc-finger fold. The region spanning 79 to 174 (ELLCVVETPV…GVTRIARGVP (96 aa)) is the Toprim domain.

It belongs to the RecR family.

May play a role in DNA repair. It seems to be involved in an RecBC-independent recombinational process of DNA repair. It may act with RecF and RecO. In Dechloromonas aromatica (strain RCB), this protein is Recombination protein RecR.